Consider the following 202-residue polypeptide: Probable nicotinate-nucleotide adenylyltransferase (202 aa).

Belongs to the NadD family.

The catalysed reaction is nicotinate beta-D-ribonucleotide + ATP + H(+) = deamido-NAD(+) + diphosphate. It functions in the pathway cofactor biosynthesis; NAD(+) biosynthesis; deamido-NAD(+) from nicotinate D-ribonucleotide: step 1/1. In terms of biological role, catalyzes the reversible adenylation of nicotinate mononucleotide (NaMN) to nicotinic acid adenine dinucleotide (NaAD). The chain is Probable nicotinate-nucleotide adenylyltransferase from Clostridium perfringens (strain 13 / Type A).